A 356-amino-acid chain; its full sequence is SERTA domain-containing protein 4 (356 aa).

Positions Ser33–Ala53 are disordered. In terms of domain architecture, SERTA spans Ile101 to Asn147. Over residues Thr215–Ser232 the composition is skewed to low complexity. 3 disordered regions span residues Thr215–Pro238, Lys280–Val302, and Trp332–Ile356. Basic and acidic residues predominate over residues Lys280–Arg292.

The polypeptide is SERTA domain-containing protein 4 (SERTAD4) (Homo sapiens (Human)).